An 809-amino-acid polypeptide reads, in one-letter code: MEAEGSSAPARAGSGEGSDSAGGATLKAPKHLWRHEQHHQYPLRQPQFRLLHPHHHLPPPPPPSPQPQPQCPLQPPPPPPLPPPPPPPGAARGRYASSGATGRVRHRGYSDTERYLYCRAMDRTSYAVETGHRPGLKKSRMSWPSSFQGLRRFDVDNGTSAGRSPLDPMTSPGSGLILQANFVHSQRRESFLYRSDSDYDLSPKSMSRNSSIASDIHGDDLIVTPFAQVLASLRTVRNNFAALTNLQDRAPSKRSPMCNQPSINKATITEEAYQKLASETLEELDWCLDQLETLQTRHSVSEMASNKFKRMLNRELTHLSEMSRSGNQVSEFISNTFLDKQHEVEIPSPTQKEKEKKKRPMSQISGVKKLMHSSSLTNSSIPRFGVKTEQEDVLAKELEDVNKWGLHVFRIAELSGNRPLTVIMHTIFQERDLLKTFKIPVDTLITYLMTLEDHYHADVAYHNNIHAADVVQSTHVLLSTPALEAVFTDLEILAAIFASAIHDVDHPGVSNQFLINTNSELALMYNDSSVLENHHLAVGFKLLQEENCDIFQNLTKKQRQSLRKMVIDIVLATDMSKHMNLLADLKTMVETKKVTSSGVLLLDNYSDRIQVLQNMVHCADLSNPTKPLQLYRQWTDRIMEEFFRQGDRERERGMEISPMCDKHNASVEKSQVGFIDYIVHPLWETWADLVHPDAQDILDTLEDNREWYQSTIPQSPSPAPDDPEEGRQGQTEKFQFELTLEEDGESDTEKDSGSQVEEDTSCSDSKTLCTQDSESTEIPLDEQVEEEAVGEEEESQPEACVIDDRSPDT.

A disordered region spans residues 1–107; the sequence is MEAEGSSAPA…SGATGRVRHR (107 aa). 3 positions are modified to phosphoserine: H54, P59, and P63. A compositionally biased stretch (pro residues) spans 58–89; that stretch reads PPPPPPSPQPQPQCPLQPPPPPPLPPPPPPPG. A compositionally biased stretch (low complexity) spans 90–102; the sequence is AARGRYASSGATG. A phosphoserine mark is found at S142, S299, S301, S348, and S375. The tract at residues 343–364 is disordered; that stretch reads EVEIPSPTQKEKEKKKRPMSQI. The 330-residue stretch at 386 to 715 folds into the PDEase domain; that stretch reads VKTEQEDVLA…EWYQSTIPQS (330 aa). K387 is covalently cross-linked (Glycyl lysine isopeptide (Lys-Gly) (interchain with G-Cter in SUMO)). H462 acts as the Proton donor in catalysis. H462 lines the 3',5'-cyclic AMP pocket. Residue H462 participates in AMP binding. Residues H466, H502, D503, and D620 each coordinate Zn(2+). AMP-binding residues include D503, D620, N623, Q671, and F674. D503 provides a ligand contact to Mg(2+). Position 503 (D503) interacts with Mn(2+). Q671 and F674 together coordinate 3',5'-cyclic AMP. 2 disordered regions span residues 710 to 729 and 739 to 809; these read STIP…GRQG and TLEE…SPDT. Residues 762-773 are compositionally biased toward polar residues; sequence CSDSKTLCTQDS. The segment covering 779–796 has biased composition (acidic residues); the sequence is PLDEQVEEEAVGEEEESQ.

It belongs to the cyclic nucleotide phosphodiesterase family. PDE4 subfamily. Homodimer for the long isoforms. Isoforms with truncated N-termini are monomeric. Isoform 3 is part of a ternary complex containing PRKAR2A, PRKAR2B and AKAP9. Interacts with PDE4DIP. Identified in a complex composed of RYR1, PDE4D, PKA, FKBP1A and protein phosphatase 1 (PP1). Isoform 5, isoform N3 and isoform 12 bind RACK1 via their unique N-terminus. Binds ARRB2. Interacts (via N-terminal region) with SHANK2 (via proline-rich region); the interaction is increased in a PKA-dependent manner. The cofactor is Zn(2+). Mg(2+) is required as a cofactor. Mn(2+) serves as cofactor. Long isoforms that share a conserved PKA phosphorylation site in the N-terminus are activated by PKA through phosphorylation. Isoform 3 and isoform 7 are activated by phosphorylation (in vitro), but not isoform 6. Isoform N3 and isoform 12 are phosphorylated on Ser-49, Ser-51, Ser-55 and Ser-59. In terms of processing, sumoylation of long isoforms by PIAS4 augments their activation by PKA phosphorylation and represses their inhibition by ERK phosphorylation. In terms of tissue distribution, expressed in colonic epithelial cells (at protein level). Widespread; most abundant in skeletal muscle. As to expression, detected in brain. Detected in brain, placenta, lung and kidney. In terms of tissue distribution, detected in heart and skeletal muscle.

Its subcellular location is the apical cell membrane. The protein localises to the cytoplasm. It localises to the membrane. The protein resides in the cytoskeleton. It is found in the microtubule organizing center. Its subcellular location is the centrosome. The enzyme catalyses 3',5'-cyclic AMP + H2O = AMP + H(+). It functions in the pathway purine metabolism; 3',5'-cyclic AMP degradation; AMP from 3',5'-cyclic AMP: step 1/1. Its activity is regulated as follows. Inhibited by rolipram. Activated by phosphatidic acid. Functionally, hydrolyzes the second messenger cAMP, which is a key regulator of many important physiological processes. This chain is 3',5'-cyclic-AMP phosphodiesterase 4D, found in Homo sapiens (Human).